Here is a 123-residue protein sequence, read N- to C-terminus: Small ribosomal subunit protein uS12 (123 aa).

Aspartate 89 carries the post-translational modification 3-methylthioaspartic acid.

This sequence belongs to the universal ribosomal protein uS12 family. As to quaternary structure, part of the 30S ribosomal subunit. Contacts proteins S8 and S17. May interact with IF1 in the 30S initiation complex.

In terms of biological role, with S4 and S5 plays an important role in translational accuracy. Functionally, interacts with and stabilizes bases of the 16S rRNA that are involved in tRNA selection in the A site and with the mRNA backbone. Located at the interface of the 30S and 50S subunits, it traverses the body of the 30S subunit contacting proteins on the other side and probably holding the rRNA structure together. The combined cluster of proteins S8, S12 and S17 appears to hold together the shoulder and platform of the 30S subunit. The protein is Small ribosomal subunit protein uS12 of Phenylobacterium zucineum (strain HLK1).